The sequence spans 250 residues: MVTAVSPENLKEWHTPSTRPDVIHELIHGVDRYNPSNLPFMEDYLATELKEGQYDLFGNLAILKLYQFNPQHSNPDVIINILIKALAATVSGPDFNLCLEMLREPSAILHDIESADEALVIVMPYLQRLHELSRTCQFTKFWQEINSDSEAAKILRTRYLPQHASPLDDFRFIFSASIASCFRRISLSQLSRWLDIPSDKVGEWCSKVEWTVEGQDAVIPNNGQNDVKAGVVKENVQLGQLTKLVAAAGY.

Positions 54-235 (YDLFGNLAIL…DVKAGVVKEN (182 aa)) constitute a PCI domain.

It belongs to the eIF-3 subunit K family. In terms of assembly, component of the eukaryotic translation initiation factor 3 (eIF-3) complex.

Its subcellular location is the cytoplasm. Component of the eukaryotic translation initiation factor 3 (eIF-3) complex, which is involved in protein synthesis of a specialized repertoire of mRNAs and, together with other initiation factors, stimulates binding of mRNA and methionyl-tRNAi to the 40S ribosome. The eIF-3 complex specifically targets and initiates translation of a subset of mRNAs involved in cell proliferation. This Cryptococcus neoformans var. neoformans serotype D (strain B-3501A) (Filobasidiella neoformans) protein is Eukaryotic translation initiation factor 3 subunit K.